The following is a 434-amino-acid chain: Serine hydroxymethyltransferase (434 aa).

Residues leucine 128 and 132 to 134 each bind (6S)-5,6,7,8-tetrahydrofolate; that span reads GHL. Lysine 237 carries the N6-(pyridoxal phosphate)lysine modification.

It belongs to the SHMT family. Homodimer. Requires pyridoxal 5'-phosphate as cofactor.

Its subcellular location is the cytoplasm. The enzyme catalyses (6R)-5,10-methylene-5,6,7,8-tetrahydrofolate + glycine + H2O = (6S)-5,6,7,8-tetrahydrofolate + L-serine. It functions in the pathway one-carbon metabolism; tetrahydrofolate interconversion. It participates in amino-acid biosynthesis; glycine biosynthesis; glycine from L-serine: step 1/1. Catalyzes the reversible interconversion of serine and glycine with tetrahydrofolate (THF) serving as the one-carbon carrier. This reaction serves as the major source of one-carbon groups required for the biosynthesis of purines, thymidylate, methionine, and other important biomolecules. Also exhibits THF-independent aldolase activity toward beta-hydroxyamino acids, producing glycine and aldehydes, via a retro-aldol mechanism. In Corynebacterium glutamicum (strain R), this protein is Serine hydroxymethyltransferase.